The sequence spans 157 residues: Cuticle protein 19 (157 aa).

6 repeat units span residues 11–14, 18–21, 24–27, 29–32, 39–42, and 47–50. Residues 56–127 form the Chitin-binding type R&amp;R domain; sequence YPKYAFEYGV…SGPSAHPAPA (72 aa). Residues 141-144 form repeat 7; it reads AAPA.

Its function is as follows. Component of the cuticle of migratory locust which contains more than 100 different structural proteins. The protein is Cuticle protein 19 of Locusta migratoria (Migratory locust).